The chain runs to 705 residues: Effector protein hopD1 (705 aa).

Polar residues-rich tracts occupy residues 1–11 and 28–41; these read MNPLRSIQHNI and QAQQ…SPSQ. Disordered stretches follow at residues 1–41 and 173–207; these read MNPL…SPSQ and SSSL…DSGS. Positions 173-184 are enriched in low complexity; the sequence is SSSLETPLLSSP.

The protein localises to the secreted. Functionally, effector protein involved in non-host recognition. This Pseudomonas syringae pv. tomato (strain ATCC BAA-871 / DC3000) protein is Effector protein hopD1 (hopD1).